Here is a 779-residue protein sequence, read N- to C-terminus: Anion/proton exchange transporter GEF1 (779 aa).

Residues 1–75 (MPTTYVPINQ…REVIWDRAKT (75 aa)) lie on the Cytoplasmic side of the membrane. A helical transmembrane segment spans residues 76-96 (FITLSSTAIVIGCIAGFLQVF). Over 97–154 (TETLVNWKTGHCQRNWLLNKSFCCNGVVNEVTSTSNLLLKRQEFECEAQGLWIAWKGH) the chain is Lumenal. Residues 155–175 (VSPFIIFMLLSVLFALISTLL) traverse the membrane as a helical segment. Residues 176–177 (VK) are Cytoplasmic-facing. Residues 178 to 198 (YVAPMATGSGISEIKVWVSGF) form a helical membrane-spanning segment. The Lumenal segment spans residues 199–203 (EYNKE). A helical transmembrane segment spans residues 204–224 (FLGFLTLVIKSVALPLAISSG). The Cytoplasmic portion of the chain corresponds to 225–264 (LSVGKEGPSVHYATCCGYLLTKWLLRDTLTYSSQYEYITA). A helical transmembrane segment spans residues 265–285 (ASGAGVAVAFGAPIGGVLFGL). Over 286 to 296 (EEIASANRFNS) the chain is Lumenal. The chain crosses the membrane as a helical span at residues 297-319 (STLWKSYYVALVAITTLKYIDPF). The Cytoplasmic portion of the chain corresponds to 320 to 336 (RNGRVILFNVTYDRDWK). A helical transmembrane segment spans residues 337 to 357 (VQEIPIFIALGIFGGLYGKYI). Residues 358–369 (SKWNINFIHFRK) are Lumenal-facing. The helical transmembrane segment at 370-390 (MYLSSWPVQEVLFLATLTALI) threads the bilayer. The Cytoplasmic segment spans residues 391–436 (SYFNEFLKLDMTESMGILFHECVKNDNTSTFSHRLCQLDENTHAFE). The chain crosses the membrane as a helical span at residues 437–457 (FLKIFTSLCFATVIRALLVVV). Residues 458-465 (SYGARVPA) are Lumenal-facing. Residues 466-486 (GIFVPSMAVGATFGRAVSLLV) form a helical membrane-spanning segment. Over 487-500 (ERFISGPSVITPGA) the chain is Cytoplasmic. Residues 501–523 (YAFLGAAATLSGITNLTLTVVVI) traverse the membrane as a helical segment. Residues 524-529 (MFELTG) lie on the Lumenal side of the membrane. Residues 530–552 (AFMYIIPLMIVVAITRIILSTSG) form a helical membrane-spanning segment. Over 553-779 (ISGGIADQMI…FTTNRNGNVI (227 aa)) the chain is Cytoplasmic. CBS domains are found at residues 591 to 659 (MSSK…VNST) and 688 to 744 (MNES…YREV).

It belongs to the chloride channel (TC 2.A.49) family. In terms of assembly, homodimer. Interacts with GET3. Proteolytically processed in the secretory pathway by protease KEX2 within the first extracellular loop. However, both the N- and C-terminal products of the cleavage reaction are required for assembly of a functional channel.

The protein resides in the golgi apparatus membrane. It localises to the endosome membrane. It is found in the prevacuolar compartment membrane. Anion/proton exchange transporter involved in iron and copper cation homeostasis. Involved in intracellular iron metabolism during growth on fermentable and non fermentable carbon sources. Required for proper copper-loading and maturation of multicopper oxidase FET3. Important for adjusting intracellular compartment pH to more alkaline pH under iron limitation. May also transport chloride ions through the plasma membrane. The chain is Anion/proton exchange transporter GEF1 (GEF1) from Saccharomyces cerevisiae (strain ATCC 204508 / S288c) (Baker's yeast).